Here is an 89-residue protein sequence, read N- to C-terminus: Small ribosomal subunit protein uS15 (89 aa).

This sequence belongs to the universal ribosomal protein uS15 family. As to quaternary structure, part of the 30S ribosomal subunit. Forms a bridge to the 50S subunit in the 70S ribosome, contacting the 23S rRNA.

One of the primary rRNA binding proteins, it binds directly to 16S rRNA where it helps nucleate assembly of the platform of the 30S subunit by binding and bridging several RNA helices of the 16S rRNA. In terms of biological role, forms an intersubunit bridge (bridge B4) with the 23S rRNA of the 50S subunit in the ribosome. The chain is Small ribosomal subunit protein uS15 from Lactobacillus delbrueckii subsp. bulgaricus (strain ATCC 11842 / DSM 20081 / BCRC 10696 / JCM 1002 / NBRC 13953 / NCIMB 11778 / NCTC 12712 / WDCM 00102 / Lb 14).